The following is a 312-amino-acid chain: tRNA-cytidine(32) 2-sulfurtransferase (312 aa).

The PP-loop motif signature appears at 39–44; that stretch reads SGGKDS. [4Fe-4S] cluster contacts are provided by Cys114, Cys117, and Cys205.

This sequence belongs to the TtcA family. Homodimer. Requires Mg(2+) as cofactor. [4Fe-4S] cluster is required as a cofactor.

The protein resides in the cytoplasm. The enzyme catalyses cytidine(32) in tRNA + S-sulfanyl-L-cysteinyl-[cysteine desulfurase] + AH2 + ATP = 2-thiocytidine(32) in tRNA + L-cysteinyl-[cysteine desulfurase] + A + AMP + diphosphate + H(+). It functions in the pathway tRNA modification. Its function is as follows. Catalyzes the ATP-dependent 2-thiolation of cytidine in position 32 of tRNA, to form 2-thiocytidine (s(2)C32). The sulfur atoms are provided by the cysteine/cysteine desulfurase (IscS) system. This is tRNA-cytidine(32) 2-sulfurtransferase from Cupriavidus pinatubonensis (strain JMP 134 / LMG 1197) (Cupriavidus necator (strain JMP 134)).